Here is a 559-residue protein sequence, read N- to C-terminus: Formate--tetrahydrofolate ligase (559 aa).

Position 68–75 (68–75 (TPAGEGKT)) interacts with ATP.

The protein belongs to the formate--tetrahydrofolate ligase family. Homotetramer.

The catalysed reaction is (6S)-5,6,7,8-tetrahydrofolate + formate + ATP = (6R)-10-formyltetrahydrofolate + ADP + phosphate. Its pathway is one-carbon metabolism; tetrahydrofolate interconversion. In Moorella thermoacetica (Clostridium thermoaceticum), this protein is Formate--tetrahydrofolate ligase.